The primary structure comprises 164 residues: Type II secretion system protein M (164 aa).

Over 1–17 (MNELRQRWQAMSQRERQ) the chain is Cytoplasmic. Residues 18-38 (LMVVCAAVLLLCVVYYAILQP) traverse the membrane as a helical segment. Residues 39–164 (WQEREDLWER…RLMLERTDEA (126 aa)) lie on the Periplasmic side of the membrane.

The protein belongs to the GSP M family. As to quaternary structure, type II secretion system is composed of four main components: the outer membrane complex, the inner membrane complex, the cytoplasmic secretion ATPase and the periplasm-spanning pseudopilus. Forms homodimers. Interacts with OutL/GspL. Interacts with OutE/GspE and OutF/GspF.

The protein localises to the cell inner membrane. In terms of biological role, inner membrane component of the type II secretion system required for the energy-dependent secretion of extracellular factors such as proteases and toxins from the periplasm. Plays a role in the complex assembly and recruits OutL resulting in a stable complex in the inner membrane. Provides thus a link between the energy-providing OutE protein in the cytoplasm and the rest of the T2SS machinery. This is Type II secretion system protein M (outM) from Pectobacterium carotovorum subsp. carotovorum (Erwinia carotovora subsp. carotovora).